Here is a 206-residue protein sequence, read N- to C-terminus: Ribosomal RNA small subunit methyltransferase G (206 aa).

Residues Gly74, Leu79, 125 to 126, and Arg140 each bind S-adenosyl-L-methionine; that span reads VE.

This sequence belongs to the methyltransferase superfamily. RNA methyltransferase RsmG family.

It localises to the cytoplasm. The catalysed reaction is guanosine(527) in 16S rRNA + S-adenosyl-L-methionine = N(7)-methylguanosine(527) in 16S rRNA + S-adenosyl-L-homocysteine. Its function is as follows. Specifically methylates the N7 position of guanine in position 527 of 16S rRNA. The protein is Ribosomal RNA small subunit methyltransferase G of Shewanella woodyi (strain ATCC 51908 / MS32).